The following is a 467-amino-acid chain: ATP synthase subunit beta (467 aa).

156-163 (GGAGVGKT) is a binding site for ATP.

It belongs to the ATPase alpha/beta chains family. In terms of assembly, F-type ATPases have 2 components, CF(1) - the catalytic core - and CF(0) - the membrane proton channel. CF(1) has five subunits: alpha(3), beta(3), gamma(1), delta(1), epsilon(1). CF(0) has three main subunits: a(1), b(2) and c(9-12). The alpha and beta chains form an alternating ring which encloses part of the gamma chain. CF(1) is attached to CF(0) by a central stalk formed by the gamma and epsilon chains, while a peripheral stalk is formed by the delta and b chains.

Its subcellular location is the cell inner membrane. It catalyses the reaction ATP + H2O + 4 H(+)(in) = ADP + phosphate + 5 H(+)(out). Produces ATP from ADP in the presence of a proton gradient across the membrane. The catalytic sites are hosted primarily by the beta subunits. This chain is ATP synthase subunit beta, found in Ralstonia nicotianae (strain ATCC BAA-1114 / GMI1000) (Ralstonia solanacearum).